A 429-amino-acid chain; its full sequence is Dihydroorotase (429 aa).

The Zn(2+) site is built by His59 and His61. Substrate-binding positions include 61–63 and Asn93; that span reads HLR. 4 residues coordinate Zn(2+): Lys143, His171, His229, and Asp298. Lys143 is subject to N6-carboxylysine. Residue Asp298 is part of the active site. Substrate contacts are provided by residues His302 and 316-317; that span reads AG.

The protein belongs to the metallo-dependent hydrolases superfamily. DHOase family. Class I DHOase subfamily. The cofactor is Zn(2+).

The enzyme catalyses (S)-dihydroorotate + H2O = N-carbamoyl-L-aspartate + H(+). It participates in pyrimidine metabolism; UMP biosynthesis via de novo pathway; (S)-dihydroorotate from bicarbonate: step 3/3. Its function is as follows. Catalyzes the reversible cyclization of carbamoyl aspartate to dihydroorotate. This chain is Dihydroorotase, found in Methanosphaera stadtmanae (strain ATCC 43021 / DSM 3091 / JCM 11832 / MCB-3).